The primary structure comprises 717 residues: MLNEKKPVEQLTETEAAEELAFLVTELARHDALYHGQDAPEISDADYDALKRRNDLIEELFPALIREDSPSRKIGAAPSLTFQPVLHARPMLSLDNTFSDEDARDFVAGIYRFLGKLPDHSIAFTAEPKIDGLSMSLRYENRKLVTAATRGDGTTGENVTANIRTIRMIPQTLPADAPDVVEVRGEIYMAKSDFAALNAEMAAQGRPLYVNPRNTASGSLRQLDAKVTASRKLRFFAYAWGEISAMPSDTQFGMVETFKAWGFPVNPLMQRLSSADELLQHYHHIERERPDLDYDIDGVVYKVDRLDLQARLGFRSRSPRWATAHKFPAEQAFTRLKGIDIQVGRTGALTPVARLEPITVGGVVVTNATLHNEDYIRGIGNSGEPIREGRDIRIGDMVIVQRAGDVIPQIVDVVMDERAEGAEPYRFPTTCPVCGSHAVRDINEKTGKVDAVRRCTGGFVCRAQAIEHLKHFVSRHAFDIEGLGSKQIEFFFESEDPTLSIRTAPDIFTLERRQEASLTKLENIEGFGKVSVRKLYEAINARREIALHRFIYALGIRHVGETTAKLLARSYGTYEHFRAAMVDAGSLAGDAWNELNSIEGIGEVVARAIVEFYKEPRNLKVVSDLLEEVRPESAETRVSTDSPVAGKTVVFTGSLEKMTRDEAKAKAESLGAKVAGSVSKKTDIVVAGPGAGSKLDKARELGVQTMDEDEWLALIGG.

NAD(+)-binding positions include 44–48, 93–94, and Glu127; these read DADYD and SL. The active-site N6-AMP-lysine intermediate is the Lys129. The NAD(+) site is built by Arg150, Glu186, Lys302, and Lys326. Zn(2+)-binding residues include Cys431, Cys434, Cys455, and Cys461. Residues 639–717 enclose the BRCT domain; sequence STDSPVAGKT…EDEWLALIGG (79 aa).

Belongs to the NAD-dependent DNA ligase family. LigA subfamily. Mg(2+) serves as cofactor. Mn(2+) is required as a cofactor.

It catalyses the reaction NAD(+) + (deoxyribonucleotide)n-3'-hydroxyl + 5'-phospho-(deoxyribonucleotide)m = (deoxyribonucleotide)n+m + AMP + beta-nicotinamide D-nucleotide.. Its function is as follows. DNA ligase that catalyzes the formation of phosphodiester linkages between 5'-phosphoryl and 3'-hydroxyl groups in double-stranded DNA using NAD as a coenzyme and as the energy source for the reaction. It is essential for DNA replication and repair of damaged DNA. This chain is DNA ligase, found in Sinorhizobium fredii (strain NBRC 101917 / NGR234).